A 138-amino-acid polypeptide reads, in one-letter code: Ribonuclease kappa-A (138 aa).

The signal sequence occupies residues 1 to 24; the sequence is MVLYFSPVLTFFLANFFNSKSTTT. Over 25–75 the chain is Extracellular; the sequence is ENLQVFLVENQHRDSKRKINPTFSKKGIEVRQQNENLWSKIVALRFDYSVW. The helical transmembrane segment at 76 to 96 threads the bilayer; that stretch reads GIIQLVLMMGLFFYINSVALI. Over 97 to 138 the chain is Cytoplasmic; it reads EDLPIDEEFNSVEEFYTAATSAYNQNAYTVGLPVHLCAYASI.

Belongs to the RNase K family.

The protein localises to the membrane. Endoribonuclease. The chain is Ribonuclease kappa-A from Ceratitis capitata (Mediterranean fruit fly).